The chain runs to 157 residues: Neutrophil recruitment protein (157 aa).

The signal sequence occupies residues 1–19 (MCSIWLTFFLSFLILNTKA).

Belongs to the PBP/GOBP family. In terms of assembly, interacts with mouse TLR1; the interaction promotes activation of canonical NF-kappa-B signaling in host macrophages. Interacts with human TLR1. Interacts with mouse TLR4; the interaction promotes activation of canonical NF-kappa-B signaling in host macrophages. Interacts with human TLR4. In terms of tissue distribution, female salivary gland (at protein level).

It localises to the secreted. Functionally, activates MyD88-dependent canonical NF-kappa-B signaling in host macrophages via interaction with host TLR1 and TLR4; this drives the expression of neutrophil chemoattractants, followed by the subsequent influx of neutrophils and recruitment of myeloid cells at the bite site. (Microbial infection) Promotes Zika virus infection in mouse model by facilitating recruitment of flavivirus-permissive myeloid cells at the bite site. In terms of biological role, (Microbial infection) Promotes dengue virus infection in mouse model by facilitating recruitment of flavivirus-permissive myeloid cells at the bite site. The sequence is that of Neutrophil recruitment protein from Aedes aegypti (Yellowfever mosquito).